The primary structure comprises 331 residues: Cathepsin S (331 aa).

Positions 1–16 (MKWLVGLLPLCSYAVA) are cleaved as a signal peptide. A propeptide spans 17-114 (QVHKDPTLDH…VTYRSNSNQK (98 aa)) (activation peptide). An N-linked (GlcNAc...) asparagine glycan is attached at N104. Disulfide bonds link C126–C224, C136–C180, C170–C213, and C272–C320. Residue C139 is part of the active site. Residues H278 and N298 contribute to the active site.

The protein belongs to the peptidase C1 family.

It is found in the lysosome. The protein localises to the secreted. Its subcellular location is the cytoplasmic vesicle. The protein resides in the phagosome. The catalysed reaction is Similar to cathepsin L, but with much less activity on Z-Phe-Arg-|-NHMec, and more activity on the Z-Val-Val-Arg-|-Xaa compound.. In terms of biological role, thiol protease. Key protease responsible for the removal of the invariant chain from MHC class II molecules and MHC class II antigen presentation. The bond-specificity of this proteinase is in part similar to the specificities of cathepsin L. This is Cathepsin S (CTSS) from Canis lupus familiaris (Dog).